Here is a 387-residue protein sequence, read N- to C-terminus: Patatin-12 (387 aa).

Residues 1–23 form the signal peptide; that stretch reads MATTKSFLILIVMILATTSSTFA. Positions 32–230 constitute a PNPLA domain; the sequence is LSIDGGGIKG…TVGDPALLSL (199 aa). The short motif at 36 to 41 is the GXGXXG element; the sequence is GGGIKG. The GXSXG motif lies at 75–79; sequence GTSTG. Serine 77 functions as the Nucleophile in the catalytic mechanism. A glycan (N-linked (GlcNAc...) asparagine) is linked at asparagine 115. Aspartate 216 (proton acceptor) is an active-site residue. A DGA/G motif is present at residues 216–218; the sequence is DGG. Positions 322 to 385 form a coiled coil; it reads ENALTGTTTE…DRKKLRANKA (64 aa).

This sequence belongs to the patatin family. Tuber.

Its subcellular location is the vacuole. Functionally, probable lipolytic acyl hydrolase (LAH), an activity which is thought to be involved in the response of tubers to pathogens. This Solanum tuberosum (Potato) protein is Patatin-12.